The chain runs to 60 residues: Large ribosomal subunit protein uL30 (60 aa).

Belongs to the universal ribosomal protein uL30 family. In terms of assembly, part of the 50S ribosomal subunit.

This Lactiplantibacillus plantarum (strain ATCC BAA-793 / NCIMB 8826 / WCFS1) (Lactobacillus plantarum) protein is Large ribosomal subunit protein uL30.